We begin with the raw amino-acid sequence, 399 residues long: MALNLNPVSTPFQCRRLPSFSPRQTPSRRSPKFFMASTLSSSSPKEAESLKKPFSPPREVHVQVTHSMPQEKIEIFKSLEGWAEENLLVHLKPVEKCWQPQDYLPDPASEDFRDQVKEIQERAKEIPDDLYVVLVGDMITEEALPTYQTMLNTLDGAKDETGASPTSWAVWTRAWTAEENRHGDLLNKYLYLSGRVDMRSIEKTIQYLIGSGMDPRTENNPYLGFVYTSFQERATFVSHGNSARLAKEHGDLKMAQICGIIASDEKRHETAYTKIVEKLFEIDPDATVLAFADMMKKKISMPAHLMYDGRDDNLFDHFSAVAQRLGVYTAKDYADILEFLVGRWEVEKLTGLSSEGQKAQDYVCSLPPRIRRLEERARERAKQAPSMPFSWIFDRQVKL.

Over residues 1-12 (MALNLNPVSTPF) the composition is skewed to polar residues. Residues 1-35 (MALNLNPVSTPFQCRRLPSFSPRQTPSRRSPKFFM) constitute a chloroplast transit peptide. The interval 1 to 57 (MALNLNPVSTPFQCRRLPSFSPRQTPSRRSPKFFMASTLSSSSPKEAESLKKPFSPP) is disordered. Positions 141, 179, 182, 232, 265, and 268 each coordinate Fe cation.

Belongs to the fatty acid desaturase type 2 family. As to quaternary structure, homodimer. It depends on Fe(2+) as a cofactor.

It is found in the plastid. The protein localises to the chloroplast. It catalyses the reaction octadecanoyl-[ACP] + 2 reduced [2Fe-2S]-[ferredoxin] + O2 + 2 H(+) = (9Z)-octadecenoyl-[ACP] + 2 oxidized [2Fe-2S]-[ferredoxin] + 2 H2O. Its pathway is lipid metabolism; fatty acid metabolism. Functionally, converts stearoyl-ACP to oleoyl-ACP by introduction of a cis double bond between carbons 9 and 10 of the acyl chain. The sequence is that of Stearoyl-[acyl-carrier-protein] 9-desaturase, chloroplastic from Spinacia oleracea (Spinach).